Consider the following 432-residue polypeptide: 23S rRNA (uracil(1939)-C(5))-methyltransferase RlmD (432 aa).

The TRAM domain occupies 1 to 53 (MPIGKIESLDHEARGITRQEGKAIFVDGALPGETVEYASFRRKSKFELAHLVH). C66, C72, C75, and C154 together coordinate [4Fe-4S] cluster. Positions 263, 292, 297, 313, 341, and 362 each coordinate S-adenosyl-L-methionine. C388 functions as the Nucleophile in the catalytic mechanism.

It belongs to the class I-like SAM-binding methyltransferase superfamily. RNA M5U methyltransferase family. RlmD subfamily.

The enzyme catalyses uridine(1939) in 23S rRNA + S-adenosyl-L-methionine = 5-methyluridine(1939) in 23S rRNA + S-adenosyl-L-homocysteine + H(+). Catalyzes the formation of 5-methyl-uridine at position 1939 (m5U1939) in 23S rRNA. This Dechloromonas aromatica (strain RCB) protein is 23S rRNA (uracil(1939)-C(5))-methyltransferase RlmD.